Consider the following 359-residue polypeptide: 4-galactosyl-N-acetylglucosaminide 3-alpha-L-fucosyltransferase FUT6 (359 aa).

Over 1–14 (MDPLGPAKPQWSWR) the chain is Cytoplasmic. The helical; Signal-anchor for type II membrane protein transmembrane segment at 15 to 34 (CCLTTLLFQLLMAVCFFSYL) threads the bilayer. Over 35 to 359 (RVSQDDPTVY…QTRGIAAWFT (325 aa)) the chain is Lumenal. Residues N46, N91, N153, and N184 are each glycosylated (N-linked (GlcNAc...) asparagine). Residues 73 to 112 (KPIALPRCSEMVPGTADCNITADRKVYPQADAVIVHHREV) are determines site-specific fucosylation.

It belongs to the glycosyltransferase 10 family. Homodimer and monomer. Monomer (secreted form). N-glycosylated. Post-translationally, proteolytic cleavage releases a secreted glycoform of 43 kDa. In terms of tissue distribution, kidney, liver, colon, small intestine, bladder, uterus and salivary gland.

The protein localises to the golgi apparatus. It localises to the golgi stack membrane. Its subcellular location is the secreted. The catalysed reaction is a beta-D-galactosyl-(1-&gt;4)-N-acetyl-beta-D-glucosaminyl derivative + GDP-beta-L-fucose = a beta-D-galactosyl-(1-&gt;4)-[alpha-L-fucosyl-(1-&gt;3)]-N-acetyl-beta-D-glucosaminyl derivative + GDP + H(+). The enzyme catalyses an N-acetyl-alpha-neuraminyl-(2-&gt;3)-beta-D-galactosyl-(1-&gt;4)-N-acetyl-beta-D-glucosaminyl derivative + GDP-beta-L-fucose = an alpha-Neu5Ac-(2-&gt;3)-beta-D-Gal-(1-&gt;4)-[alpha-L-Fuc-(1-&gt;3)]-beta-D-GlcNAc derivative + GDP + H(+). It catalyses the reaction an alpha-Neu5Ac-(2-&gt;3)-beta-D-Gal-(1-&gt;4)-beta-D-GlcNAc-(1-&gt;3)-beta-D-Gal-(1-&gt;4)-[alpha-L-Fuc-(1-&gt;3)]-beta-D-GlcNAc derivative + GDP-beta-L-fucose = an alpha-Neu5Ac-(2-&gt;3)-beta-D-Gal-(1-&gt;4)-[alpha-L-Fuc-(1-&gt;3)]-beta-D-GlcNAc-(1-&gt;3)-beta-D-Gal-(1-&gt;4)-[alpha-L-Fuc-(1-&gt;3)]-beta-D-GlcNAc derivative + GDP + H(+). It carries out the reaction a neolactoside nLc6Cer + GDP-beta-L-fucose = beta-D-Gal-(1-&gt;4)-[alpha-L-Fuc-(1-&gt;3)]-beta-D-GlcNAc-(1-&gt;3)-beta-D-Gal-(1-&gt;4)-beta-D-GlcNAc-(1-&gt;3)-beta-D-Gal-(1-&gt;4)-beta-D-Glc-(1&lt;-&gt;1')-Cer + GDP + H(+). The catalysed reaction is a neolactoside nLc6Cer + GDP-beta-L-fucose = beta-D-galactosyl-(1-&gt;4)-N-acetyl-beta-D-glucosaminyl-(1-&gt;3)-beta-D-galactosyl-(1-&gt;4)-[alpha-L-fucosyl-(1-&gt;3)]-N-acetyl-beta-D-glucosaminyl-(1-&gt;3)-beta-D-galactosyl-(1-&gt;4)-beta-D-glucosyl-(1&lt;-&gt;1')-ceramide + GDP + H(+). The enzyme catalyses a neolactoside VI(3)-alpha-NeuNAc-nLc6Cer + GDP-beta-L-fucose = a neolactoside VI(3)-alpha-NeuAc,V(3)-alphaFuc-nLc6Cer + GDP + H(+). It catalyses the reaction beta-D-galactosyl-(1-&gt;4)-N-acetyl-D-glucosamine + GDP-beta-L-fucose = beta-D-galactosyl-(1-&gt;4)-[alpha-L-fucosyl-(1-&gt;3)]-N-acetyl-D-glucosamine + GDP + H(+). It carries out the reaction N-acetyl-alpha-neuraminosyl-(2-&gt;3)-beta-D-galactosyl-(1-&gt;4)-N-acetyl-beta-D-glucosamine + GDP-beta-L-fucose = N-acetyl-alpha-neuraminosyl-(2-&gt;3)-beta-D-galactosyl-(1-&gt;4)-[alpha-L-fucosyl-(1-&gt;3)]-N-acetyl-beta-D-glucosamine + GDP + H(+). The catalysed reaction is lactose + GDP-beta-L-fucose = beta-D-galactosyl-(1-&gt;4)-[alpha-L-fucosyl-(1-&gt;3)]-D-glucose + GDP + H(+). The enzyme catalyses alpha-L-Fuc-(1-&gt;2)-beta-D-Gal-(1-&gt;4)-D-Glc + GDP-beta-L-fucose = alpha-L-Fuc-(1-&gt;2)-beta-D-Gal-(1-&gt;4)-[alpha-L-Fuc-(1-&gt;3)]-D-Glc + GDP + H(+). It catalyses the reaction a beta-D-galactosyl-(1-&gt;4)-N-acetyl-beta-D-6-sulfooxy-glucosaminyl derivative + GDP-beta-L-fucose = a beta-D-galactosyl-(1-&gt;4)-[alpha-L-fucosyl-(1-&gt;3)]-N-acetyl-beta-D-6-sulfooxy-glucosaminyl derivative + GDP + H(+). Its pathway is protein modification; protein glycosylation. Functionally, catalyzes the transfer of L-fucose, from a guanosine diphosphate-beta-L-fucose, to the N-acetyl glucosamine (GlcNAc) of a distal alpha2,3 sialylated lactosamine unit of a glycoprotein- or a glycolipid-linked sialopolylactosamines chain or of a distal or internal lactosamine unit of a neutral glycoprotein- or a glycolipid-linked polylactosamines chain through an alpha-1,3 glycosidic linkage and participates in surface expression of the sialyl Lewis X (sLe(x)), Lewis X (Le(x)) and non sialylated VIM2 determinants. Moreover transfers fucose to H-type 2 (Fucalpha1-2Galbeta1-4GlcNAc) chain acceptor substrates and participates in difucosylated sialyl Lewis x determinants. Also fucosylates a polylactosamine substrate having a 6 sulfate modification at the GlcNAc moiety and gives rise to sialyl and non-sialyl 6-sulfo lewis X. Does not have activity towards type 1 ((Galbeta1-3GlcNAc)) and H-type 1 chain (Fucalpha1-2Galbeta1-3GlcNAc) acceptors substrates. Its function is as follows. Does not have alpha(1,3)-fucosyltransferase activity. This chain is 4-galactosyl-N-acetylglucosaminide 3-alpha-L-fucosyltransferase FUT6, found in Homo sapiens (Human).